The sequence spans 314 residues: MSSNDEKHAVAIIGSGNIGTDLMVKILRHGKHLKMGAFVGIDPESDGLKRAERMGVPTVTTGIDGLLAHPDFGSIRYVFDATSAGAHARHEQLLRPHGVRVIDLTPAAIGPFVVPAVNIDQHLDSPNVNMVTCGGQATIPMVAAVSRVVPVEYAEIVASISSRSAGPGTRANIDEFTETTSNAIVQVGGAKAGKAIIVLNPAEPPLIMRDTVYCLVPGDASQSAIVESVEQMVDSVRTYVPGYRLKQAVQFDEFKGRMPQELATVRAPRLKVSVFLEVEGAGHYLPSYAGNLDIMTSAALATAERIAARQPVTA.

15–18 (SGNI) contributes to the NAD(+) binding site. Catalysis depends on Cys-133, which acts as the Acyl-thioester intermediate. Residues 164-172 (SAGPGTRAN) and Asn-291 contribute to the NAD(+) site.

It belongs to the acetaldehyde dehydrogenase family.

The catalysed reaction is acetaldehyde + NAD(+) + CoA = acetyl-CoA + NADH + H(+). The protein is Acetaldehyde dehydrogenase 1 of Paraburkholderia xenovorans (strain LB400).